A 627-amino-acid polypeptide reads, in one-letter code: Dual specificity testis-specific protein kinase 1 (627 aa).

The segment at 1–36 (MAGERPPLRGPGPGEAPGEGPGGAGGGPGRGRPSSY) is disordered. Gly residues predominate over residues 11 to 30 (PGPGEAPGEGPGGAGGGPGR). In terms of domain architecture, Protein kinase spans 52-309 (FDCAEKIGAG…TEITQHLEQI (258 aa)). ATP contacts are provided by residues 58 to 66 (IGAGFFSEV) and lysine 81. Catalysis depends on aspartate 170, which acts as the Proton acceptor. Serine 215 carries the phosphoserine; by autocatalysis modification. A compositionally biased stretch (low complexity) spans 316–330 (ATPLAKPPLTKAPLT). Disordered regions lie at residues 316–373 (ATPL…SWGD), 436–485 (RCRS…GLAP), 500–519 (CSSASQPWSPRSGPPLNNNP), and 532–565 (REPWNRAQHSLPRAAALERTEPSPPPSAPREPEE). At arginine 338 the chain carries Omega-N-methylarginine. Residues 348–357 (PDPRLSRSRS) are compositionally biased toward basic and acidic residues. Positions 421-525 (VTTPDILVQP…NNNPPAVVVN (105 aa)) are required for interaction with YWHAB. The required for interaction with PARVA stretch occupies residues 528–625 (QGWAREPWNR…PTPSLQLPGA (98 aa)). The interval 528–627 (QGWAREPWNR…PSLQLPGARS (100 aa)) is required for interaction with SPRED1 and SPRY2. Required for TESK1-mediated dephosphorylation of SPRY2 and SPRY2 inhibition of ERK phosphorylation.

The protein belongs to the protein kinase superfamily. TKL Ser/Thr protein kinase family. As to quaternary structure, interacts (via both C- and N-termini) with SPRY4 (via C-terminus); the interaction inhibits TESK1 kinase activity. Interacts with TAOK1; the interaction inhibits TAOK1 kinase activity. Interacts (via C-terminus) with SPRED1 (via C-terminus); the interaction inhibits TESK1 kinase activity. Interacts (via C-terminus) with PARVA/PARVIN (via C-terminus); the interaction inhibits TESK1 kinase activity. Interacts with YWHAB/14-3-3 beta; the interaction is dependent on the phosphorylation of TESK1 Ser-439 and inhibits TESK1 kinase activity. Interacts with SPRY1, SPRY3 and SPRED2. Interacts (via C-terminus) with SPRY2 (via C-terminus); the interaction disrupts SPRY2 interaction with PPP2CA/PP2A-C, possibly by vesicular sequestration of SPRY2. Therefore dephosphorylation of SPRY2 by the serine/threonine-protein phosphatase 2A (PP2A) holoenzyme is lost, inhibiting its interaction with GRB2. Mg(2+) serves as cofactor. It depends on Mn(2+) as a cofactor. Post-translationally, autophosphorylated on serine and tyrosine residues. In terms of tissue distribution, expressed in testes and brain (at protein level).

The protein resides in the cytoplasm. It is found in the perinuclear region. It localises to the cytoskeleton. Its subcellular location is the microtubule organizing center. The protein localises to the centrosome. The protein resides in the cell projection. It is found in the lamellipodium. It catalyses the reaction L-seryl-[protein] + ATP = O-phospho-L-seryl-[protein] + ADP + H(+). The enzyme catalyses L-threonyl-[protein] + ATP = O-phospho-L-threonyl-[protein] + ADP + H(+). It carries out the reaction L-tyrosyl-[protein] + ATP = O-phospho-L-tyrosyl-[protein] + ADP + H(+). Activated by autophosphorylation on Ser-215. Kinase activity is inhibited by SPRED1. Dual specificity protein kinase activity catalyzing autophosphorylation and phosphorylation of exogenous substrates on both serine/threonine and tyrosine residues. Regulates the cellular cytoskeleton by enhancing actin stress fiber formation via phosphorylation of cofilin and by preventing microtubule breakdown via inhibition of TAOK1/MARKK kinase activity. Inhibits podocyte motility via regulation of actin cytoskeletal dynamics and phosphorylation of CFL1. Positively regulates integrin-mediated cell spreading, via phosphorylation of cofilin. Suppresses ciliogenesis via multiple pathways; phosphorylation of CFL1, suppression of ciliary vesicle directional trafficking to the ciliary base, and by facilitating YAP1 nuclear localization where it acts as a transcriptional corepressor of the TEAD4 target genes AURKA and PLK1. Probably plays a central role at and after the meiotic phase of spermatogenesis. The polypeptide is Dual specificity testis-specific protein kinase 1 (Tesk1) (Mus musculus (Mouse)).